The following is a 488-amino-acid chain: Acetyl-coenzyme A carboxylase carboxyl transferase subunit beta, chloroplastic (488 aa).

Positions leucine 227–asparagine 488 constitute a CoA carboxyltransferase N-terminal domain. The Zn(2+) site is built by cysteine 231, cysteine 234, cysteine 247, and cysteine 250. The C4-type zinc-finger motif lies at cysteine 231–cysteine 250.

The protein belongs to the AccD/PCCB family. As to quaternary structure, acetyl-CoA carboxylase is a heterohexamer composed of biotin carboxyl carrier protein, biotin carboxylase and 2 subunits each of ACCase subunit alpha and ACCase plastid-coded subunit beta (accD). Requires Zn(2+) as cofactor. As to expression, accumulates in fatty acids synthesizing tissues such as embryos, expanding leaves, flower buds, flowers, and developing siliques.

The protein localises to the plastid. Its subcellular location is the chloroplast membrane. It is found in the chloroplast stroma. The enzyme catalyses N(6)-carboxybiotinyl-L-lysyl-[protein] + acetyl-CoA = N(6)-biotinyl-L-lysyl-[protein] + malonyl-CoA. The protein operates within lipid metabolism; malonyl-CoA biosynthesis; malonyl-CoA from acetyl-CoA: step 1/1. Its function is as follows. Component of the acetyl coenzyme A carboxylase (ACC) complex. Biotin carboxylase (BC) catalyzes the carboxylation of biotin on its carrier protein (BCCP) and then the CO(2) group is transferred by the transcarboxylase to acetyl-CoA to form malonyl-CoA. This chain is Acetyl-coenzyme A carboxylase carboxyl transferase subunit beta, chloroplastic, found in Arabidopsis thaliana (Mouse-ear cress).